The primary structure comprises 377 residues: Glutamate 5-kinase (377 aa).

Lysine 18 lines the ATP pocket. Substrate is bound by residues serine 59, aspartate 146, and asparagine 158. Residues serine 178–aspartate 179 and threonine 222–lysine 228 contribute to the ATP site. One can recognise a PUA domain in the interval glutamine 286 to threonine 363.

The protein belongs to the glutamate 5-kinase family.

It localises to the cytoplasm. The catalysed reaction is L-glutamate + ATP = L-glutamyl 5-phosphate + ADP. The protein operates within amino-acid biosynthesis; L-proline biosynthesis; L-glutamate 5-semialdehyde from L-glutamate: step 1/2. Catalyzes the transfer of a phosphate group to glutamate to form L-glutamate 5-phosphate. This is Glutamate 5-kinase from Caulobacter vibrioides (strain ATCC 19089 / CIP 103742 / CB 15) (Caulobacter crescentus).